We begin with the raw amino-acid sequence, 451 residues long: Trigger factor (451 aa).

Residues 170-256 (DHIATIDYCE…LTALKYKDLP (87 aa)) form the PPIase FKBP-type domain.

Belongs to the FKBP-type PPIase family. Tig subfamily.

It localises to the cytoplasm. The enzyme catalyses [protein]-peptidylproline (omega=180) = [protein]-peptidylproline (omega=0). Functionally, involved in protein export. Acts as a chaperone by maintaining the newly synthesized protein in an open conformation. Functions as a peptidyl-prolyl cis-trans isomerase. The chain is Trigger factor from Treponema denticola (strain ATCC 35405 / DSM 14222 / CIP 103919 / JCM 8153 / KCTC 15104).